The chain runs to 345 residues: Tubulin-folding cofactor C (345 aa).

At Met1 the chain carries N-acetylmethionine. The segment covering 1 to 10 (MEDDGQSSVA) has biased composition (polar residues). The disordered stretch occupies residues 1–83 (MEDDGQSSVA…SRLASSSTDS (83 aa)). A compositionally biased stretch (basic and acidic residues) spans 23–39 (DMLERLSARHQARKSDS). The span at 40–55 (PDSSSSSSSTLESTSS) shows a compositional bias: low complexity. A compositionally biased stretch (basic and acidic residues) spans 61–73 (SDSKRSIESRIAE). Positions 74–83 (SRLASSSTDS) are enriched in low complexity. In terms of domain architecture, C-CAP/cofactor C-like spans 169-318 (PPKLVPVRDS…NWANVDDFRW (150 aa)).

It belongs to the TBCC family. In terms of assembly, supercomplex made of cofactors A to E. Cofactors A and D function by capturing and stabilizing tubulin in a quasi-native conformation. Cofactor E binds to the cofactor D-tubulin complex; interaction with cofactor C then causes the release of tubulin polypeptides that are committed to the native state. Ubiquitously expressed (at protein level). Present in leaves, roots, flowers, and stems.

The protein localises to the cytoplasm. In terms of biological role, essential tubulin-folding protein involved in the final step of the tubulin folding pathway. Required for continuous microtubule cytoskeleton organization, mitotic division, cytokinesis, and to couple cell cycle progression to cell division in embryos and endosperms. Not essential for cell viability. Binds probably to the multimeric supercomplex, stimulating GTP hydrolysis by the bound beta-tubulin and the release of the alpha-/beta-tubulin heterodimer. The sequence is that of Tubulin-folding cofactor C (TFCC) from Arabidopsis thaliana (Mouse-ear cress).